The sequence spans 150 residues: UPF0208 membrane protein VP2081 (150 aa).

A run of 2 helical transmembrane segments spans residues 42-62 (FGIK…MAFN) and 70-90 (SIVV…WLGA).

Belongs to the UPF0208 family.

Its subcellular location is the cell inner membrane. The chain is UPF0208 membrane protein VP2081 from Vibrio parahaemolyticus serotype O3:K6 (strain RIMD 2210633).